The chain runs to 199 residues: ATP-dependent Clp protease proteolytic subunit (199 aa).

Ser102 serves as the catalytic Nucleophile. His127 is a catalytic residue.

It belongs to the peptidase S14 family. Fourteen ClpP subunits assemble into 2 heptameric rings which stack back to back to give a disk-like structure with a central cavity, resembling the structure of eukaryotic proteasomes.

It localises to the cytoplasm. The enzyme catalyses Hydrolysis of proteins to small peptides in the presence of ATP and magnesium. alpha-casein is the usual test substrate. In the absence of ATP, only oligopeptides shorter than five residues are hydrolyzed (such as succinyl-Leu-Tyr-|-NHMec, and Leu-Tyr-Leu-|-Tyr-Trp, in which cleavage of the -Tyr-|-Leu- and -Tyr-|-Trp bonds also occurs).. Its function is as follows. Cleaves peptides in various proteins in a process that requires ATP hydrolysis. Has a chymotrypsin-like activity. Plays a major role in the degradation of misfolded proteins. The protein is ATP-dependent Clp protease proteolytic subunit of Pseudothermotoga lettingae (strain ATCC BAA-301 / DSM 14385 / NBRC 107922 / TMO) (Thermotoga lettingae).